The chain runs to 80 residues: Protein FAM229B (80 aa).

The disordered stretch occupies residues 1–45 (MPFRFGTQPRRFPVEGGDSSIELESGLSSSASCNGKETSPNRQLR). The span at 15–32 (EGGDSSIELESGLSSSAS) shows a compositional bias: low complexity. Polar residues predominate over residues 33–42 (CNGKETSPNR).

This sequence belongs to the FAM229 family.

This is Protein FAM229B (Fam229b) from Rattus norvegicus (Rat).